The primary structure comprises 373 residues: Plasmepsin VIII (373 aa).

The N-terminal stretch at 1 to 21 (MNKFFVFPLLLILNSIVLVKS) is a signal peptide. The region spanning 50 to 370 (FIGEISIGNP…EKDNMRIGLA (321 aa)) is the Peptidase A1 domain. Residues Asp68 and Asp258 contribute to the active site.

Belongs to the peptidase A1 family.

Its function is as follows. During the development in the mosquito vector, plays an essential role in sporozoite egress from the oocyst and sporozoite gliding motility, which is required for the invasion of salivary glands and subsequent transmission to the host. This is Plasmepsin VIII from Plasmodium berghei (strain Anka).